Reading from the N-terminus, the 222-residue chain is Riboflavin kinase (222 aa).

An H-T-H motif-like region spans residues 1 to 94 (METIDAEDAA…AKIFDVKDEQ (94 aa)). The tract at residues 95–222 (YVLTGTVMSG…ENSEVVVVIG (128 aa)) is riboflavin kinase. 104-109 (GVGEGR) contacts CDP. Residues T133 and N135 each coordinate Mg(2+). Residues T190 and E198 each coordinate FMN. 203 to 206 (TQLR) lines the CDP pocket.

The protein belongs to the archaeal riboflavin kinase family. Mg(2+) is required as a cofactor.

The catalysed reaction is riboflavin + CTP = CDP + FMN + H(+). It participates in cofactor biosynthesis; FMN biosynthesis; FMN from riboflavin (CTP route): step 1/1. Catalyzes the CTP-dependent phosphorylation of riboflavin (vitamin B2) to form flavin mononucleotide (FMN). This is Riboflavin kinase (ribK) from Methanocorpusculum labreanum (strain ATCC 43576 / DSM 4855 / Z).